Reading from the N-terminus, the 229-residue chain is Protein-lysine N-methyltransferase EFM4 (229 aa).

It belongs to the class I-like SAM-binding methyltransferase superfamily. EFM4 family.

It is found in the cytoplasm. It carries out the reaction L-lysyl-[protein] + S-adenosyl-L-methionine = N(6)-methyl-L-lysyl-[protein] + S-adenosyl-L-homocysteine + H(+). The enzyme catalyses N(6)-methyl-L-lysyl-[protein] + S-adenosyl-L-methionine = N(6),N(6)-dimethyl-L-lysyl-[protein] + S-adenosyl-L-homocysteine + H(+). S-adenosyl-L-methionine-dependent protein-lysine N-methyltransferase that mono- and dimethylates elongation factor 1-alpha (TEF1 and TEF2) at 'Lys-316'. May play a role in intracellular transport. The sequence is that of Protein-lysine N-methyltransferase EFM4 from Saccharomyces cerevisiae (strain ATCC 204508 / S288c) (Baker's yeast).